Here is a 1001-residue protein sequence, read N- to C-terminus: Serine/threonine-protein kinase TAO1 (1001 aa).

S9 is modified (phosphoserine). The region spanning 28–281 is the Protein kinase domain; the sequence is FTDLREIGHG…SEELLKHIFV (254 aa). ATP contacts are provided by residues 34-42 and K57; that span reads IGHGSFGAV. D151 (proton acceptor) is an active-site residue. The segment at 324–433 is disordered; sequence PAVEAQEEEE…QVSRHKSHYR (110 aa). The span at 350–373 shows a compositional bias: low complexity; sequence SNQSIPSMSISASSQSSSVNSLPD. 2 stretches are compositionally biased toward basic and acidic residues: residues 375–388 and 399–416; these read SDDK…EGDH and LKPE…RTRA. Phosphoserine occurs at positions 421 and 445. Positions 458–651 form a coiled coil; that stretch reads SELREQMSGY…QTQKDLEHAM (194 aa). Positions 567–587 are disordered; that stretch reads KEELNENQSTPKKEKQEWLSK. Over residues 577–587 the composition is skewed to basic and acidic residues; it reads PKKEKQEWLSK. Position 669 is a phosphothreonine (T669). A coiled-coil region spans residues 754-877; that stretch reads KAVLKRLKEE…LERQAREIEA (124 aa). Positions 911 to 1001 are disordered; sequence SHNPTGGPGP…ISNGSHMSYT (91 aa). S965 is modified (phosphoserine). Positions 975-1001 are enriched in polar residues; sequence GGRTEQGMSRSTSVTSQISNGSHMSYT.

The protein belongs to the protein kinase superfamily. STE Ser/Thr protein kinase family. STE20 subfamily. In terms of assembly, self-associates. Interacts with MAP2K3. Interacts with SPRED1. Interacts with TESK1; the interaction inhibits TAOK1 kinase activity. Interacts with MAP3K7. In terms of processing, proteolytically processed by caspase-3 (CASP3). Autophosphorylated. Phosphorylated by ATM in response to DNA damage. Phosphorylated by LRRK2. In terms of tissue distribution, highly expressed in the testis, and to a lower extent also expressed in brain, placenta, colon and skeletal muscle.

The protein localises to the cytoplasm. It carries out the reaction L-seryl-[protein] + ATP = O-phospho-L-seryl-[protein] + ADP + H(+). The catalysed reaction is L-threonyl-[protein] + ATP = O-phospho-L-threonyl-[protein] + ADP + H(+). With respect to regulation, serine/threonine-protein kinase activity is inhibited by SPRED1. Functionally, serine/threonine-protein kinase involved in various processes such as p38/MAPK14 stress-activated MAPK cascade, DNA damage response and regulation of cytoskeleton stability. Phosphorylates MAP2K3, MAP2K6 and MARK2. Acts as an activator of the p38/MAPK14 stress-activated MAPK cascade by mediating phosphorylation and subsequent activation of the upstream MAP2K3 and MAP2K6 kinases. Involved in G-protein coupled receptor signaling to p38/MAPK14. In response to DNA damage, involved in the G2/M transition DNA damage checkpoint by activating the p38/MAPK14 stress-activated MAPK cascade, probably by mediating phosphorylation of MAP2K3 and MAP2K6. Acts as a regulator of cytoskeleton stability by phosphorylating 'Thr-208' of MARK2, leading to activate MARK2 kinase activity and subsequent phosphorylation and detachment of MAPT/TAU from microtubules. Also acts as a regulator of apoptosis: regulates apoptotic morphological changes, including cell contraction, membrane blebbing and apoptotic bodies formation via activation of the MAPK8/JNK cascade. Plays an essential role in the regulation of neuronal development in the central nervous system. Also plays a role in the regulation of neuronal migration to the cortical plate. The sequence is that of Serine/threonine-protein kinase TAO1 (TAOK1) from Homo sapiens (Human).